The primary structure comprises 277 residues: Sulfur carrier protein FdhD (277 aa).

Residue cysteine 121 is the Cysteine persulfide intermediate of the active site. 260–265 (FCKPGR) provides a ligand contact to Mo-bis(molybdopterin guanine dinucleotide).

The protein belongs to the FdhD family.

It is found in the cytoplasm. Its function is as follows. Required for formate dehydrogenase (FDH) activity. Acts as a sulfur carrier protein that transfers sulfur from IscS to the molybdenum cofactor prior to its insertion into FDH. This is Sulfur carrier protein FdhD from Escherichia coli O6:K15:H31 (strain 536 / UPEC).